We begin with the raw amino-acid sequence, 471 residues long: Ubiquitin-conjugating enzyme E2 variant 3 (471 aa).

The 144-residue stretch at 2-145 folds into the UEV domain; it reads DVNSEPVKKV…EEEPPLGTKS (144 aa). Position 183–211 (183–211) interacts with NAD(+); that stretch reads GDLGIAAVLSIMAKSCVDKLVLIDIPENS.

The protein in the N-terminal section; belongs to the ubiquitin-conjugating enzyme family. UEV subfamily. This sequence in the C-terminal section; belongs to the LDH/MDH superfamily. In terms of assembly, homodimer.

Its function is as follows. Possible negative regulator of polyubiquitination. The protein is Ubiquitin-conjugating enzyme E2 variant 3 (uevld) of Danio rerio (Zebrafish).